The following is a 343-amino-acid chain: UDP-3-O-acylglucosamine N-acyltransferase 2 (343 aa).

His251 functions as the Proton acceptor in the catalytic mechanism.

This sequence belongs to the transferase hexapeptide repeat family. LpxD subfamily. Homotrimer.

It catalyses the reaction a UDP-3-O-[(3R)-3-hydroxyacyl]-alpha-D-glucosamine + a (3R)-hydroxyacyl-[ACP] = a UDP-2-N,3-O-bis[(3R)-3-hydroxyacyl]-alpha-D-glucosamine + holo-[ACP] + H(+). It participates in bacterial outer membrane biogenesis; LPS lipid A biosynthesis. Catalyzes the N-acylation of UDP-3-O-acylglucosamine using 3-hydroxyacyl-ACP as the acyl donor. Is involved in the biosynthesis of lipid A, a phosphorylated glycolipid that anchors the lipopolysaccharide to the outer membrane of the cell. This chain is UDP-3-O-acylglucosamine N-acyltransferase 2, found in Legionella pneumophila (strain Paris).